The following is a 657-amino-acid chain: Hemocyanin B chain (657 aa).

Cysteines 93 and 98 form a disulfide. N-linked (GlcNAc...) asparagine glycosylation is present at N167. Cu cation-binding residues include H194, H198, H224, H344, H348, and H384. Intrachain disulfides connect C483–C502 and C562–C609.

It belongs to the tyrosinase family. Hemocyanin subfamily. In terms of assembly, hexamer of a number of different chains, of which A, B, and C have been identified. Hemolymph.

Its subcellular location is the secreted. The protein resides in the extracellular space. In terms of biological role, hemocyanins are copper-containing oxygen carriers occurring freely dissolved in the hemolymph of many mollusks and arthropods. The protein is Hemocyanin B chain of Panulirus interruptus (California spiny lobster).